A 245-amino-acid chain; its full sequence is Ribosomal RNA large subunit methyltransferase E (245 aa).

Residues 1 to 25 (MTKSPIGGNRSGRKLGQKVKKGKLK) form a disordered region. Over residues 11 to 25 (SGRKLGQKVKKGKLK) the composition is skewed to basic residues. Residues glycine 81, tryptophan 83, aspartate 104, aspartate 120, and aspartate 144 each coordinate S-adenosyl-L-methionine. Lysine 184 serves as the catalytic Proton acceptor.

The protein belongs to the class I-like SAM-binding methyltransferase superfamily. RNA methyltransferase RlmE family.

Its subcellular location is the cytoplasm. The catalysed reaction is uridine(2552) in 23S rRNA + S-adenosyl-L-methionine = 2'-O-methyluridine(2552) in 23S rRNA + S-adenosyl-L-homocysteine + H(+). In terms of biological role, specifically methylates the uridine in position 2552 of 23S rRNA at the 2'-O position of the ribose in the fully assembled 50S ribosomal subunit. The sequence is that of Ribosomal RNA large subunit methyltransferase E from Sinorhizobium fredii (strain NBRC 101917 / NGR234).